The sequence spans 431 residues: Adenylosuccinate synthetase (431 aa).

Residues 12–18 and 40–42 each bind GTP; these read GDEGKGK and GHT. The active-site Proton acceptor is Asp-13. Asp-13 and Gly-40 together coordinate Mg(2+). IMP contacts are provided by residues 13–16, 38–41, Thr-131, Arg-145, Gln-225, Thr-240, and Arg-304; these read DEGK and NAGH. The Proton donor role is filled by His-41. Residue 300–306 participates in substrate binding; sequence TTTGRKR. GTP-binding positions include Arg-306, 332-334, and 414-416; these read KLD and STS.

This sequence belongs to the adenylosuccinate synthetase family. In terms of assembly, homodimer. Mg(2+) serves as cofactor.

It localises to the cytoplasm. The catalysed reaction is IMP + L-aspartate + GTP = N(6)-(1,2-dicarboxyethyl)-AMP + GDP + phosphate + 2 H(+). Its pathway is purine metabolism; AMP biosynthesis via de novo pathway; AMP from IMP: step 1/2. Functionally, plays an important role in the de novo pathway of purine nucleotide biosynthesis. Catalyzes the first committed step in the biosynthesis of AMP from IMP. In Jannaschia sp. (strain CCS1), this protein is Adenylosuccinate synthetase.